The following is a 149-amino-acid chain: uncharacterized protein (149 aa).

Residues 1 to 11 (MTKESKPDRLR) show a composition bias toward basic and acidic residues. Residues 1–20 (MTKESKPDRLRQMGALNPKP) form a disordered region.

This is an uncharacterized protein from Sinorhizobium fredii (strain NBRC 101917 / NGR234).